The chain runs to 259 residues: MVLIRVLANLLVLQLSYAQKSSELVVGGDECDINEHPFLVALYTSSSSTVHCAGTLINQEWVLTAVHCDRKNIRIKLGMHSKNIRNEDEQIRVPRRKFFCLNTKFPNGKDKDIMLIRLRRPVKNSAHIAPISLPSSPSSPRSRCRIMGWGKISTTEETYPDVPHCAKIFIVKHAWCEALYPWVPADSRTLCAGILQGGKDTCEGDSGGPLICNGQIQGIVSGGSDPCGQRLKPAVYTKVFDYTDWIQSIIAGNTTATCP.

Positions 1 to 18 are cleaved as a signal peptide; it reads MVLIRVLANLLVLQLSYA. Positions 19 to 24 are excised as a propeptide; that stretch reads QKSSEL. The Peptidase S1 domain occupies 25–251; the sequence is VVGGDECDIN…YTDWIQSIIA (227 aa). Disulfide bonds link cysteine 31–cysteine 165, cysteine 52–cysteine 68, cysteine 100–cysteine 258, cysteine 144–cysteine 212, cysteine 176–cysteine 191, and cysteine 202–cysteine 227. Catalysis depends on charge relay system residues histidine 67 and aspartate 112. The active-site Charge relay system is the serine 206. N-linked (GlcNAc...) asparagine glycosylation occurs at asparagine 253.

It belongs to the peptidase S1 family. Snake venom subfamily. As to quaternary structure, monomer. In terms of processing, N-glycosylated. Contains 4.4% of hexoses, 4.4% of hexosamines and 3.1% of sialic acids. Expressed by the venom gland.

It is found in the secreted. The catalysed reaction is Fully activates human clotting factor V by a single cleavage at the 1545-Trp-Tyr-Leu-Arg-|-Ser-Asn-Asn-Gly-1552 bond. Cattle, but not rabbit, factor V is cleaved, and no other proteins of the clotting system are attacked. Esterase activity is observed on Bz-Arg-OEt and Tos-Arg-OMe, and amidase activity on Phe-pipecolyl-Arg-NHPhNO2.. Its activity is regulated as follows. Inhibited by D-Phe-Pro-Arg-chloromethyl ketone (FPRCK) (98%), PMSF (93%), benzamidine (67%), and diisopropylfluorophosphate (DFP). Is not inhibited by BPTI, antithrombin and EDTA. In terms of biological role, venom serine protease that converts factor V (F5) to the active form Va in the presence of calcium ions and phospholipids. It cleaves the Arg(1545)-Ser(1546) linkage in the human factor V molecule. Has hydrolytic activities against BAEE (1.2 U/mg), TAME, and Pro-Phe-Arg-MCA (4.9 U/mg). Shows coagulant activity. The polypeptide is Factor V activator (Macrovipera lebetinus (Levantine viper)).